A 432-amino-acid chain; its full sequence is Adenylosuccinate synthetase (432 aa).

Residues 13-19 and 41-43 contribute to the GTP site; these read GDEGKGK and GHT. Catalysis depends on D14, which acts as the Proton acceptor. Mg(2+) is bound by residues D14 and G41. IMP contacts are provided by residues 14 to 17, 39 to 42, T130, R144, Q225, T240, and R304; these read DEGK and NAGH. H42 serves as the catalytic Proton donor. Position 300 to 306 (300 to 306) interacts with substrate; it reads STTGRPR. GTP contacts are provided by residues R306, 332 to 334, and 416 to 418; these read KLD and STG.

The protein belongs to the adenylosuccinate synthetase family. Homodimer. It depends on Mg(2+) as a cofactor.

It is found in the cytoplasm. It catalyses the reaction IMP + L-aspartate + GTP = N(6)-(1,2-dicarboxyethyl)-AMP + GDP + phosphate + 2 H(+). It functions in the pathway purine metabolism; AMP biosynthesis via de novo pathway; AMP from IMP: step 1/2. Functionally, plays an important role in the de novo pathway of purine nucleotide biosynthesis. Catalyzes the first committed step in the biosynthesis of AMP from IMP. This chain is Adenylosuccinate synthetase, found in Nitrosomonas eutropha (strain DSM 101675 / C91 / Nm57).